The chain runs to 243 residues: Ribonuclease PH (243 aa).

Residues Arg91 and 129 to 131 each bind phosphate; that span reads GTR.

Belongs to the RNase PH family. Homohexameric ring arranged as a trimer of dimers.

It carries out the reaction tRNA(n+1) + phosphate = tRNA(n) + a ribonucleoside 5'-diphosphate. In terms of biological role, phosphorolytic 3'-5' exoribonuclease that plays an important role in tRNA 3'-end maturation. Removes nucleotide residues following the 3'-CCA terminus of tRNAs; can also add nucleotides to the ends of RNA molecules by using nucleoside diphosphates as substrates, but this may not be physiologically important. Probably plays a role in initiation of 16S rRNA degradation (leading to ribosome degradation) during starvation. The chain is Ribonuclease PH from Burkholderia lata (strain ATCC 17760 / DSM 23089 / LMG 22485 / NCIMB 9086 / R18194 / 383).